Reading from the N-terminus, the 182-residue chain is Protein YIPF6 homolog (182 aa).

Over 1–45 (MIESENPNTLDEPVIQTILRDLKMIGFKLYHVILPRGNAANVLRD) the chain is Cytoplasmic. Residues 46–66 (WDLWGPLILCLVMAIFLSISA) traverse the membrane as a helical segment. Residues 67 to 70 (EEQK) lie on the Lumenal side of the membrane. The helical transmembrane segment at 71-91 (ALEFTIVFVVVWCGAAIVTVN) threads the bilayer. At 92 to 104 (GQLLCGNISFFQS) the chain is on the cytoplasmic side. A helical transmembrane segment spans residues 105–125 (VCILGYCIFPLTIATIIIWII). At 126–133 (QNFTMIVK) the chain is on the lumenal side. The helical transmembrane segment at 134–154 (LPIVGGAWFWSSFASYGFLGS) threads the bilayer. The Cytoplasmic portion of the chain corresponds to 155-161 (SVPESRR). Residues 162–182 (LLAVYPVLLFYLVIAWLVVVQ) form a helical membrane-spanning segment.

The protein belongs to the YIP1 family.

It localises to the golgi apparatus membrane. This chain is Protein YIPF6 homolog (yipf6), found in Dictyostelium discoideum (Social amoeba).